The following is a 280-amino-acid chain: Diaminopimelate epimerase (280 aa).

N11 and N62 together coordinate substrate. C71 (proton donor) is an active-site residue. Substrate is bound by residues 72–73 (GN), N160, N193, and 211–212 (ER). The Proton acceptor role is filled by C220. 221 to 222 (GT) contacts substrate.

It belongs to the diaminopimelate epimerase family. As to quaternary structure, homodimer.

It is found in the cytoplasm. It carries out the reaction (2S,6S)-2,6-diaminopimelate = meso-2,6-diaminopimelate. The protein operates within amino-acid biosynthesis; L-lysine biosynthesis via DAP pathway; DL-2,6-diaminopimelate from LL-2,6-diaminopimelate: step 1/1. In terms of biological role, catalyzes the stereoinversion of LL-2,6-diaminopimelate (L,L-DAP) to meso-diaminopimelate (meso-DAP), a precursor of L-lysine and an essential component of the bacterial peptidoglycan. The sequence is that of Diaminopimelate epimerase from Acetivibrio thermocellus (strain ATCC 27405 / DSM 1237 / JCM 9322 / NBRC 103400 / NCIMB 10682 / NRRL B-4536 / VPI 7372) (Clostridium thermocellum).